Here is a 486-residue protein sequence, read N- to C-terminus: Ribulose bisphosphate carboxylase large chain (486 aa).

The substrate site is built by Asn-126 and Thr-176. The active-site Proton acceptor is Lys-178. Lys-180 is a binding site for substrate. Lys-204, Asp-206, and Glu-207 together coordinate Mg(2+). Lys-204 is subject to N6-carboxylysine. His-296 functions as the Proton acceptor in the catalytic mechanism. 3 residues coordinate substrate: Arg-297, His-329, and Ser-381.

This sequence belongs to the RuBisCO large chain family. Type I subfamily. In terms of assembly, heterohexadecamer of 8 large chains and 8 small chains. The cofactor is Mg(2+).

It carries out the reaction 2 (2R)-3-phosphoglycerate + 2 H(+) = D-ribulose 1,5-bisphosphate + CO2 + H2O. The enzyme catalyses D-ribulose 1,5-bisphosphate + O2 = 2-phosphoglycolate + (2R)-3-phosphoglycerate + 2 H(+). In terms of biological role, ruBisCO catalyzes two reactions: the carboxylation of D-ribulose 1,5-bisphosphate, the primary event in carbon dioxide fixation, as well as the oxidative fragmentation of the pentose substrate. Both reactions occur simultaneously and in competition at the same active site. This chain is Ribulose bisphosphate carboxylase large chain, found in Methylacidiphilum infernorum (isolate V4) (Methylokorus infernorum (strain V4)).